Consider the following 396-residue polypeptide: 1-deoxy-D-xylulose 5-phosphate reductoisomerase (396 aa).

Residues Thr-10, Gly-11, Ser-12, Ile-13, Gly-36, Lys-37, Asn-38, and Asn-124 each coordinate NADPH. Lys-125 provides a ligand contact to 1-deoxy-D-xylulose 5-phosphate. Residue Glu-126 participates in NADPH binding. Asp-150 is a binding site for Mn(2+). 1-deoxy-D-xylulose 5-phosphate contacts are provided by Ser-151, Glu-152, Ser-186, and His-209. Mn(2+) is bound at residue Glu-152. Residue Gly-215 participates in NADPH binding. Residues Ser-222, Asn-227, Lys-228, and Glu-231 each coordinate 1-deoxy-D-xylulose 5-phosphate. Residue Glu-231 coordinates Mn(2+).

This sequence belongs to the DXR family. Mg(2+) serves as cofactor. Requires Mn(2+) as cofactor.

It catalyses the reaction 2-C-methyl-D-erythritol 4-phosphate + NADP(+) = 1-deoxy-D-xylulose 5-phosphate + NADPH + H(+). The protein operates within isoprenoid biosynthesis; isopentenyl diphosphate biosynthesis via DXP pathway; isopentenyl diphosphate from 1-deoxy-D-xylulose 5-phosphate: step 1/6. In terms of biological role, catalyzes the NADPH-dependent rearrangement and reduction of 1-deoxy-D-xylulose-5-phosphate (DXP) to 2-C-methyl-D-erythritol 4-phosphate (MEP). The chain is 1-deoxy-D-xylulose 5-phosphate reductoisomerase from Haemophilus ducreyi (strain 35000HP / ATCC 700724).